The following is a 124-amino-acid chain: uncharacterized protein (124 aa).

In terms of biological role, not required for the biogenesis of c-type cytochromes. This is an uncharacterized protein from Rhodobacter capsulatus (strain ATCC BAA-309 / NBRC 16581 / SB1003).